The following is a 205-amino-acid chain: UPF0316 protein Cthe_2213 (205 aa).

3 helical membrane-spanning segments follow: residues 15-37 (LPLLIFFSRIIDVTIGTIRIIFV), 44-64 (LAPVLGFFEVLVWIMAISQIM), and 70-90 (FVCYFAYAAGFATGTFVGIII).

This sequence belongs to the UPF0316 family.

It localises to the cell membrane. This Acetivibrio thermocellus (strain ATCC 27405 / DSM 1237 / JCM 9322 / NBRC 103400 / NCIMB 10682 / NRRL B-4536 / VPI 7372) (Clostridium thermocellum) protein is UPF0316 protein Cthe_2213.